A 125-amino-acid polypeptide reads, in one-letter code: Fluoride-specific ion channel FluC (125 aa).

Helical transmembrane passes span 6–26, 36–56, 68–88, and 97–117; these read AWIA…SGLV, WGTW…WALA, FIVL…AFEA, and WLLA…CVFL. Glycine 76 and threonine 79 together coordinate Na(+).

It belongs to the fluoride channel Fluc/FEX (TC 1.A.43) family.

The protein localises to the cell inner membrane. The catalysed reaction is fluoride(in) = fluoride(out). With respect to regulation, na(+) is not transported, but it plays an essential structural role and its presence is essential for fluoride channel function. Fluoride-specific ion channel. Important for reducing fluoride concentration in the cell, thus reducing its toxicity. This is Fluoride-specific ion channel FluC from Nitrosococcus oceani (strain ATCC 19707 / BCRC 17464 / JCM 30415 / NCIMB 11848 / C-107).